A 27-amino-acid chain; its full sequence is Dermaseptin-like peptide (27 aa).

Has antimicrobial activity against the Gram-positive bacterium M.luteus and the yeast C.albicans. Has hemolytic activity on human and duck erythrocytes. In Schistosoma mansoni (Blood fluke), this protein is Dermaseptin-like peptide.